Reading from the N-terminus, the 55-residue chain is Metallothionein-1 (55 aa).

It belongs to the metallothionein superfamily. Type 11 family.

This chain is Metallothionein-1 (MTP1), found in Yarrowia lipolytica (strain CLIB 122 / E 150) (Yeast).